Consider the following 518-residue polypeptide: T-box transcription factor TBX5 (518 aa).

The segment at Met1–Phe46 is disordered. The span at Leu15–Pro28 shows a compositional bias: basic and acidic residues. The segment covering Ala34–Ala45 has biased composition (low complexity). Residues Leu58–Gly238 constitute a DNA-binding region (T-box). Disordered regions lie at residues Glu254–Pro307 and Glu330–Thr352. Polar residues predominate over residues Ser269–Ser301. Lys339 carries the N6-acetyllysine modification.

In terms of assembly, monomer. Homodimer (via the T-box); binds DNA as homodimer. Interacts (via the T-box) with NKX2-5 (via the homeobox); this complex binds DNA. Interacts with GATA4. Interacts with KAT2A and KAT2B. Post-translationally, acetylation at Lys-339 by KAT2A and KAT2B promotes nuclear retention.

The protein localises to the nucleus. It is found in the cytoplasm. In terms of biological role, DNA-binding protein that regulates the transcription of several genes and is involved in heart development and limb pattern formation. Binds to the core DNA motif of NPPA promoter. This Mus musculus (Mouse) protein is T-box transcription factor TBX5 (Tbx5).